The following is a 416-amino-acid chain: Sarcosine oxidase subunit beta (416 aa).

FAD is bound by residues glycine 41, histidine 42, glutamate 63, asparagine 71, threonine 76, and isoleucine 78. At histidine 182 the chain carries Tele-8alpha-FMN histidine. Residues valine 206, glycine 366, and lysine 368 each contribute to the FAD site.

Belongs to the SoxB family. In terms of assembly, heterotetramer composed of subunits alpha (SoxA), beta (SoxB), gamma (SoxG) and delta (SoxD). FAD serves as cofactor. FMN is required as a cofactor.

The protein resides in the cytoplasm. It catalyses the reaction sarcosine + (6S)-5,6,7,8-tetrahydrofolate + O2 = (6R)-5,10-methylene-5,6,7,8-tetrahydrofolate + glycine + H2O2. It carries out the reaction sarcosine + O2 + H2O = formaldehyde + glycine + H2O2. Its function is as follows. In the presence of tetrahydrofolate, catalyzes the oxidative demethylation of sarcosine to yield glycine, 5,10-methylenetetrahydrofolate and hydrogen peroxide. In the absence of tetrahydrofolate, catalyzes the oxidative demethylation of sarcosine to yield glycine, formaldehyde and hydrogen peroxide. This Rhizobium meliloti (strain 1021) (Ensifer meliloti) protein is Sarcosine oxidase subunit beta (soxB).